The chain runs to 2057 residues: Protein TIC 214 (2057 aa).

Transmembrane regions (helical) follow at residues 13–33 (KIIN…AFSI), 62–82 (LIMG…HIAL), 158–178 (LFVT…CEFF), and 206–226 (SDYF…HSFG). Residues 248 to 340 (LILKGTDEEE…RVIQEKERKS (93 aa)) are a coiled coil. The span at 288-302 (NHLKKKKDRQKKQGT) shows a compositional bias: basic residues. Disordered stretches follow at residues 288–316 (NHLK…NSNT), 614–807 (ETHT…EEKG), 890–910 (DEQT…NDRV), 1597–1634 (EEEE…TNND), and 1724–1817 (KKKN…KSLS). Composition is skewed to basic and acidic residues over residues 621-657 (ATDK…KETK) and 665-702 (NTVD…KETK). The segment covering 704 to 713 (NASKETNTVN) has biased composition (polar residues). Basic and acidic residues-rich tracts occupy residues 714–807 (KETK…EEKG) and 891–900 (EQTKREEKPK). Over residues 1597-1619 (EEEEINPEEEINPEEEINPEEEI) the composition is skewed to acidic residues. Polar residues predominate over residues 1622–1634 (SSNQKTPIGTNND). Basic and acidic residues predominate over residues 1753-1817 (TNSEKKSKTN…ETDSEKKSLS (65 aa)).

It belongs to the TIC214 family. Part of the Tic complex.

Its subcellular location is the plastid. It localises to the chloroplast inner membrane. Functionally, involved in protein precursor import into chloroplasts. May be part of an intermediate translocation complex acting as a protein-conducting channel at the inner envelope. This is Protein TIC 214 from Ipomoea purpurea (Common morning glory).